A 149-amino-acid polypeptide reads, in one-letter code: Small ribosomal subunit protein uS17c (149 aa).

A chloroplast-targeting transit peptide spans 1 to 49 (MITSSLTSSLQALKLSSPFAHGSTPLSSLSKPNSFPNHRMPALVPVIRA).

The protein belongs to the universal ribosomal protein uS17 family. Part of the 30S ribosomal subunit.

The protein resides in the plastid. Its subcellular location is the chloroplast. In terms of biological role, one of the primary rRNA binding proteins, it binds specifically to the 5'-end of 16S ribosomal RNA. Required for optimal plastid performance in terms of photosynthesis and growth. Required for the translation of plastid mRNAs. Plays a critical role in biosynthesis of thylakoid membrane proteins encoded by chloroplast genes. In Arabidopsis thaliana (Mouse-ear cress), this protein is Small ribosomal subunit protein uS17c (RPS17).